Consider the following 631-residue polypeptide: Nucleoside triphosphatase I (631 aa).

One can recognise a Helicase ATP-binding domain in the interval 42–204 (FLGLDSMHSL…TMLVNLLRPG (163 aa)). Residue 55 to 62 (HETGVGKT) participates in ATP binding. The short motif at 141-144 (DECH) is the DEXH box element. Residues 367-532 (KFIDVCLGIL…EFVQLFRVFK (166 aa)) form the Helicase C-terminal domain. Residues 457-524 (DIFILDMTWN…EIIQSKSKEF (68 aa)) form a binding to the cap-specific mRNA (nucleoside-2'-O-)-methyltransferase region.

The protein belongs to the helicase family. NPH I subfamily. In terms of assembly, monomer. Interacts (via C-terminus) with RAP94/OPG109 (via N-terminus). Interacts with the cap-specific mRNA (nucleoside-2'-O-)-methyltransferase OPG102.

The protein resides in the virion. The enzyme catalyses a ribonucleoside 5'-triphosphate + H2O = a ribonucleoside 5'-diphosphate + phosphate + H(+). In terms of biological role, DNA-dependent ATPase that acts as a 5' to 3' translocase on single-stranded DNA and thereby plays a role in transcription termination of viral early genes. Uses forward translocation in concert with the viral RNA polymerase RAP94/OPG109 subunit and the capping enzyme/VTF to catalyze release of UUUUUNU-containing nascent RNA from the elongation complex. In addition, acts as a positive elongation factor to assist transcription through problematic sequences. The polypeptide is Nucleoside triphosphatase I (OPG123) (Bos taurus (Bovine)).